A 167-amino-acid chain; its full sequence is Crossover junction endodeoxyribonuclease RuvC (167 aa).

Active-site residues include aspartate 11, glutamate 71, and aspartate 143. The Mg(2+) site is built by aspartate 11, glutamate 71, and aspartate 143.

The protein belongs to the RuvC family. As to quaternary structure, homodimer which binds Holliday junction (HJ) DNA. The HJ becomes 2-fold symmetrical on binding to RuvC with unstacked arms; it has a different conformation from HJ DNA in complex with RuvA. In the full resolvosome a probable DNA-RuvA(4)-RuvB(12)-RuvC(2) complex forms which resolves the HJ. The cofactor is Mg(2+).

The protein localises to the cytoplasm. It catalyses the reaction Endonucleolytic cleavage at a junction such as a reciprocal single-stranded crossover between two homologous DNA duplexes (Holliday junction).. The RuvA-RuvB-RuvC complex processes Holliday junction (HJ) DNA during genetic recombination and DNA repair. Endonuclease that resolves HJ intermediates. Cleaves cruciform DNA by making single-stranded nicks across the HJ at symmetrical positions within the homologous arms, yielding a 5'-phosphate and a 3'-hydroxyl group; requires a central core of homology in the junction. The consensus cleavage sequence is 5'-(A/T)TT(C/G)-3'. Cleavage occurs on the 3'-side of the TT dinucleotide at the point of strand exchange. HJ branch migration catalyzed by RuvA-RuvB allows RuvC to scan DNA until it finds its consensus sequence, where it cleaves and resolves the cruciform DNA. The sequence is that of Crossover junction endodeoxyribonuclease RuvC from Acidiphilium cryptum (strain JF-5).